The following is a 732-amino-acid chain: Nephrocystin-1 (732 aa).

Residues Ala3–Arg105 adopt a coiled-coil conformation. The residue at position 46 (Tyr46) is a Phosphotyrosine; by FAK2. 2 disordered regions span residues Ile103 to Thr153 and Thr205 to Thr244. 2 stretches are compositionally biased toward acidic residues: residues Thr115–Glu145 and Tyr210–Asp236. Phosphoserine; by CK2 is present on residues Ser121, Ser123, and Ser126. Residues Glu127–Lys150 adopt a coiled-coil conformation. Positions Ser152–Glu212 constitute an SH3 domain. Phosphotyrosine; by FAK2 is present on Tyr349. Residue Tyr721 is modified to Phosphotyrosine; by SRC.

It belongs to the nephrocystin-1 family. Interacts with BCAR1, PTK2B/PYK2 and tensin. Interacts with INVS and NPHP3. Interacts with PACS1; the interaction is dependent on NPHP1 phosphorylation by CK2. Interacts with KIF7. Interacts with AHI1 and TNK2. Interacts with NPHP4 in a complex containing NPHP1, NPHP4 and RPGRIP1L. Interacts with IQCB1; the interaction likely requires additional interactors. Interacts with ANKS3. Interacts with SPATA7. Interacts with FLNA. Post-translationally, phosphorylation by CK2 is required for the interaction with PACS1 and the targeting to the base region of cilia. As to expression, widespread expression, with highest levels in pituitary gland, spinal cord, thyroid gland, testis, skeletal muscle, lymph node and trachea. Weakly expressed in heart, kidney and pancreas. Expressed in nasal epithelial cells (at protein level). Expressed in the renal collecting duct (at protein level).

The protein resides in the cell junction. The protein localises to the adherens junction. Its subcellular location is the cell projection. It localises to the cilium. It is found in the cytoplasm. The protein resides in the cytoskeleton. The protein localises to the cilium axoneme. Its subcellular location is the tight junction. Together with BCAR1 it may play a role in the control of epithelial cell polarity. Involved in the organization of apical junctions in kidney cells together with NPHP4 and RPGRIP1L/NPHP8. Does not seem to be strictly required for ciliogenesis. Seems to help to recruit PTK2B/PYK2 to cell matrix adhesions, thereby initiating phosphorylation of PTK2B/PYK2 and PTK2B/PYK2-dependent signaling. May play a role in the regulation of intraflagellar transport (IFT) during cilia assembly. Required for normal retina development. In connecting photoreceptor cilia influences the movement of some IFT proteins such as IFT88 and WDR19. Involved in spermatogenesis. In Homo sapiens (Human), this protein is Nephrocystin-1 (NPHP1).